Consider the following 167-residue polypeptide: uncharacterized protein (167 aa).

The protein resides in the plastid. The protein localises to the chloroplast. This is an uncharacterized protein from Mesostigma viride (Green alga).